The chain runs to 132 residues: MNEKEKIIEYWRRRARECLDDAKLLLKNERLHSAVNRIYYALFYQVSALLLAKGLSFSKHSGVLAAFNREFVKTGKVNKELGKFYNRMFEHRKTGDYGELVEFEEENVKDWIRKAEGFLDAIEKLIEDLKRA.

This sequence belongs to the UPF0332 family.

The polypeptide is UPF0332 protein TM_1000 (Thermotoga maritima (strain ATCC 43589 / DSM 3109 / JCM 10099 / NBRC 100826 / MSB8)).